The following is a 235-amino-acid chain: LexA repressor (235 aa).

The segment at residues 26–46 (FDEMKDALDLKSKSGIHRLIT) is a DNA-binding region (H-T-H motif). Active-site for autocatalytic cleavage activity residues include Ser156 and Lys194.

The protein belongs to the peptidase S24 family. As to quaternary structure, homodimer.

The enzyme catalyses Hydrolysis of Ala-|-Gly bond in repressor LexA.. Its function is as follows. Represses a number of genes involved in the response to DNA damage (SOS response), including recA and lexA. In the presence of single-stranded DNA, RecA interacts with LexA causing an autocatalytic cleavage which disrupts the DNA-binding part of LexA, leading to derepression of the SOS regulon and eventually DNA repair. In Paramagnetospirillum magneticum (strain ATCC 700264 / AMB-1) (Magnetospirillum magneticum), this protein is LexA repressor.